A 189-amino-acid polypeptide reads, in one-letter code: UPF0340 protein SAG0103 (189 aa).

The protein belongs to the UPF0340 family.

This chain is UPF0340 protein SAG0103, found in Streptococcus agalactiae serotype V (strain ATCC BAA-611 / 2603 V/R).